Here is a 227-residue protein sequence, read N- to C-terminus: MSKEIPTPYMWSYQPQMGLAAGAAQDYSTRINYMSAGPHMISRVNGIRAHRNRILLEQAAITTTPRNNLNPRSWPAALVYQESPAPTTVVLPRDAQAEVQMTNSGAQLAGGFRHRVRSPGQGITHLTIRGRGIQLNDESVSSSLGLRPDGTFQIGGAGRPSFTPRQAILTLQTSSSEPRSGGIGTLQFIEEFVPSVYFNPFSGPPGHYPDQFIPNFDAVKDSADGYD.

The residue at position 64 (threonine 64) is a Phosphothreonine; by host. The propeptide occupies 112–157 (FRHRVRSPGQGITHLTIRGRGIQLNDESVSSSLGLRPDGTFQIGGA). 2 positions are modified to phosphoserine; by host: serine 118 and serine 174.

Belongs to the adenoviridae hexon-linking protein family. In terms of assembly, interacts with the peripentonal hexons as well as the hexons in the facets. Part of a complex composed of the core-capsid bridging protein, the endosome lysis protein VI and the hexon-linking protein VIII; these interactions bridge the virus core to the capsid. Post-translationally, cleaved by the viral protease during virion maturation. May cause the middle segment to be shed from the capsid.

Its subcellular location is the virion. It localises to the host nucleus. Functionally, structural component of the virion that acts as a cement protein on the capsid interior and which glue the peripentonal hexons and group-of-nine hexons together. The sequence is that of Pre-hexon-linking protein VIII from Human adenovirus C serotype 5 (HAdV-5).